Here is a 3414-residue protein sequence, read N- to C-terminus: Genome polyprotein (3414 aa).

The tract at residues 1-27 (MAGKAILKGKGGGPPRRVSKETAKKTR) is disordered. At 1-98 (MAGKAILKGK…LQKRGKRRST (98 aa)) the chain is on the cytoplasmic side. Residues 98–116 (TTDWTGWLLVAMLLSIALA) constitute a propeptide, ER anchor for the capsid protein C, removed in mature form by serine protease NS3. Residues 99-119 (TDWTGWLLVAMLLSIALAATV) traverse the membrane as a helical segment. Residues 120-242 (RKEGDGTTVI…HLTRVEGWVW (123 aa)) are Extracellular-facing. N144 carries N-linked (GlcNAc...) asparagine; by host glycosylation. The helical transmembrane segment at 243 to 260 (KNKSLTLAVVVIVWMTVE) threads the bilayer. Residue S261 is a topological domain, cytoplasmic. A helical membrane pass occupies residues 262 to 280 (AVTRIVIVSALLCLAPAYA). The Extracellular portion of the chain corresponds to 281-727 (SRCTHLENRD…HTVLGGAFNS (447 aa)). Cystine bridges form between C283–C310, C340–C396, C340–C401, C354–C385, C372–C396, and C372–C401. Residues 378-391 (DRGWGNHCGLFGKG) are fusion peptide. N434 is a glycosylation site (N-linked (GlcNAc...) asparagine; by host). Intrachain disulfides connect C466–C570 and C587–C618. The chain crosses the membrane as a helical span at residues 728–748 (VFGGVGFLPRILLGISLAWLG). At 749–755 (LNMRNPT) the chain is on the cytoplasmic side. A helical transmembrane segment spans residues 756 to 776 (MSMSFLLAGGLVLTMTLGVGA). Over 777 to 1132 (DVGCAVDTER…RSMVVADNGE (356 aa)) the chain is Extracellular. Intrachain disulfides connect C780–C791, C831–C920, C955–C1000, C1057–C1106, C1068–C1090, and C1089–C1093. Residues N861, N983, and N999 are each glycosylated (N-linked (GlcNAc...) asparagine; by host). Residues 1133-1153 (LLSEGGIPGIVAVFVVLEYII) traverse the membrane as a helical segment. Residues 1154-1158 (RKRPS) lie on the Cytoplasmic side of the membrane. Residues 1159-1179 (AGLTVVWGGVVVLALLVTGMV) form a helical membrane-spanning segment. Residues 1180–1187 (TLQSMLRY) are Lumenal-facing. The helical transmembrane segment at 1188-1208 (VIAVGVTFHLELGPEIVALML) threads the bilayer. Residues 1209-1236 (LQAVFELRVGLLGAFVLRRSLTTREVVT) are Cytoplasmic-facing. Residues 1237-1257 (IYFLLLVLELGLPSANLEALW) form a helical membrane-spanning segment. Over 1258-1293 (GWADALAMGAMIFRACTAEGKTGLGLLLVALMTQQN) the chain is Lumenal. A helical membrane pass occupies residues 1294 to 1314 (AVIVHQGLVIFLSVASACSVW). Residues 1315 to 1363 (KLLRGQREQKGLSWIVPLAGRLGGKGSGIRLLAFWELASRRDRRSFSEP) lie on the Cytoplasmic side of the membrane. A helical membrane pass occupies residues 1364–1381 (LTVVGVMLTLASGMMRHT). Residue S1382 is a topological domain, lumenal. Residues 1383 to 1403 (QEALCALAAASFLLLMLVLGT) traverse the membrane as a helical segment. The Cytoplasmic portion of the chain corresponds to 1404–1454 (RKMQLVAEWSGCVEWHPDLADEGGEISLRVRQDALGNFHLTELEKEERMMA). The segment at 1410–1449 (AEWSGCVEWHPDLADEGGEISLRVRQDALGNFHLTELEKE) is interacts with and activates NS3 protease. The helical intramembrane region spans 1455–1475 (FWLLAGLTASALHWTGILVVM). At 1476–2160 (GLWTMSEMLR…KMAERDAPEA (685 aa)) the chain is on the cytoplasmic side. The region spanning 1490-1669 (SDLVFSGQSG…EVEKSRPNLP (180 aa)) is the Peptidase S7 domain. Residues H1543, D1567, and S1627 each act as charge relay system; for serine protease NS3 activity in the active site. The Helicase ATP-binding domain maps to 1675 to 1831 (TGWTSKGTIT…ESNGAITSEE (157 aa)). 1688–1695 (MHPGSGKT) is a binding site for ATP. The DEAH box signature appears at 1779 to 1782 (DEAH). One can recognise a Helicase C-terminal domain in the interval 1841–2000 (DGFDWITEYE…TLRGPVATFY (160 aa)). K1883 is modified (N6-acetyllysine; by host). A helical transmembrane segment spans residues 2161 to 2181 (FLTMVEMVVLGLATLGAVWCL). At 2182–2189 (VLRTSISR) the chain is on the lumenal side. Residues 2190–2210 (MMLGTMVLLVSLALLWAGGVG) constitute an intramembrane region (helical). A topological domain (lumenal) is located at residue Y2211. The chain crosses the membrane as a helical span at residues 2212-2232 (GSMAGVALVFYTLLTVLQPEA). The Cytoplasmic portion of the chain corresponds to 2233 to 2244 (GKQRSSDDNKLA). Residues 2245-2265 (YFLLTLCSLAGLVAANEMGFL) form a helical membrane-spanning segment. Residues 2266–2299 (EKTKADLSAVLWSEREEPRVWSEWTNIDIQPAKS) lie on the Lumenal side of the membrane. The helical intramembrane region spans 2300–2320 (WGTYVLVVSLFTPYIIHQLQT). Residues 2321-2343 (RIQQLVNSAVASGAQAMRDLGGG) are Lumenal-facing. Positions 2344–2364 (TPFFGVAGHVLTLGVVSLVGA) form an intramembrane region, helical. At 2365 to 2368 (TPTS) the chain is on the lumenal side. The helical transmembrane segment at 2369 to 2389 (LVVGVGLAAFHLAIVVSGLEA) threads the bilayer. Residues 2390 to 2432 (ELTQRAHKVFFSAMVRNPMVDGDVINPFGDGEVKPALYERKMS) lie on the Cytoplasmic side of the membrane. Residues 2433 to 2453 (LILAMILCFMSVVLNRTVPAV) traverse the membrane as a helical segment. The Lumenal segment spans residues 2454–2477 (TEASAVGLAAAGQLIRPEADTLWT). A helical transmembrane segment spans residues 2478–2498 (MPVACGLSGVVRGSLWGFLPL). Residues 2499–3414 (GHRLWLRTSG…WELKVESSII (916 aa)) are Cytoplasmic-facing. An mRNA cap 0-1 NS5-type MT domain is found at 2512–2776 (GGSEGDTLGD…EMDLGVGTRC (265 aa)). Position 2567 (S2567) interacts with S-adenosyl-L-methionine. S2567 bears the Phosphoserine mark. Catalysis depends on K2572, which acts as the For 2'-O-MTase activity. G2597, W2598, T2615, I2616, and V2643 together coordinate S-adenosyl-L-methionine. Residue D2657 is the For 2'-O-MTase activity of the active site. I2658 lines the S-adenosyl-L-methionine pocket. Active-site for 2'-O-MTase activity residues include K2694 and E2730. The interval 2730 to 2734 (EMYYS) is interaction with host SCRIB. Y2732 lines the S-adenosyl-L-methionine pocket. 4 residues coordinate Zn(2+): E2950, H2954, C2959, and C2962. Residues 3040–3189 (GLFYADDTAG…RPIDDRFSKA (150 aa)) enclose the RdRp catalytic domain. Positions 3224, 3240, and 3359 each coordinate Zn(2+).

In the N-terminal section; belongs to the class I-like SAM-binding methyltransferase superfamily. mRNA cap 0-1 NS5-type methyltransferase family. Homodimer. As to quaternary structure, forms heterodimers with envelope protein E in the endoplasmic reticulum and Golgi. In terms of assembly, homodimer; in the endoplasmic reticulum and Golgi. Forms homodimers as well as homohexamers. NS1 may interact with NS4A. As to quaternary structure, forms a heterodimer with serine protease NS3. May form homooligomers. In terms of assembly, forms a heterodimer with NS2B. Interacts with NS4B. Interacts with unphosphorylated RNA-directed RNA polymerase NS5; this interaction stimulates RNA-directed RNA polymerase NS5 guanylyltransferase activity. Interacts with serine protease NS3. As to quaternary structure, interacts with host STAT2; this interaction inhibits the phosphorylation of the latter, and, when all viral proteins are present (polyprotein), targets STAT2 for degradation. In terms of processing, specific enzymatic cleavages in vivo yield mature proteins. Cleavages in the lumen of endoplasmic reticulum are performed by host signal peptidase, whereas cleavages in the cytoplasmic side are performed by serine protease NS3. Signal cleavage at the 2K-4B site requires a prior NS3 protease-mediated cleavage at the 4A-2K site. Cleaved in post-Golgi vesicles by a host furin, releasing the mature small envelope protein M, and peptide pr. This cleavage is incomplete as up to 30% of viral particles still carry uncleaved prM. Post-translationally, N-glycosylated. In terms of processing, N-glycosylated. The excreted form is glycosylated and this is required for efficient secretion of the protein from infected cells. Acetylated by host KAT5. Acetylation modulates NS3 RNA-binding and unwinding activities and plays an important positive role for viral replication. Post-translationally, phosphorylated on serines residues. This phosphorylation may trigger NS5 nuclear localization.

The protein localises to the virion. Its subcellular location is the host nucleus. It is found in the host cytoplasm. The protein resides in the host perinuclear region. It localises to the secreted. The protein localises to the virion membrane. Its subcellular location is the host endoplasmic reticulum membrane. The enzyme catalyses Selective hydrolysis of -Xaa-Xaa-|-Yaa- bonds in which each of the Xaa can be either Arg or Lys and Yaa can be either Ser or Ala.. It carries out the reaction RNA(n) + a ribonucleoside 5'-triphosphate = RNA(n+1) + diphosphate. The catalysed reaction is a ribonucleoside 5'-triphosphate + H2O = a ribonucleoside 5'-diphosphate + phosphate + H(+). It catalyses the reaction ATP + H2O = ADP + phosphate + H(+). The enzyme catalyses a 5'-end (5'-triphosphoguanosine)-ribonucleoside in mRNA + S-adenosyl-L-methionine = a 5'-end (N(7)-methyl 5'-triphosphoguanosine)-ribonucleoside in mRNA + S-adenosyl-L-homocysteine. It carries out the reaction a 5'-end (N(7)-methyl 5'-triphosphoguanosine)-ribonucleoside in mRNA + S-adenosyl-L-methionine = a 5'-end (N(7)-methyl 5'-triphosphoguanosine)-(2'-O-methyl-ribonucleoside) in mRNA + S-adenosyl-L-homocysteine + H(+). Its function is as follows. Plays a role in virus budding by binding to the cell membrane and gathering the viral RNA into a nucleocapsid that forms the core of a mature virus particle. During virus entry, may induce genome penetration into the host cytoplasm after hemifusion induced by the surface proteins. Can migrate to the cell nucleus where it modulates host functions. Functionally, inhibits RNA silencing by interfering with host Dicer. Prevents premature fusion activity of envelope proteins in trans-Golgi by binding to envelope protein E at pH6.0. After virion release in extracellular space, gets dissociated from E dimers. In terms of biological role, acts as a chaperone for envelope protein E during intracellular virion assembly by masking and inactivating envelope protein E fusion peptide. prM is the only viral peptide matured by host furin in the trans-Golgi network probably to avoid catastrophic activation of the viral fusion activity in acidic Golgi compartment prior to virion release. prM-E cleavage is inefficient, and many virions are only partially matured. These uncleaved prM would play a role in immune evasion. Its function is as follows. May play a role in virus budding. Exerts cytotoxic effects by activating a mitochondrial apoptotic pathway through M ectodomain. May display a viroporin activity. Functionally, binds to host cell surface receptor and mediates fusion between viral and cellular membranes. Envelope protein is synthesized in the endoplasmic reticulum in the form of heterodimer with protein prM. They play a role in virion budding in the ER, and the newly formed immature particle is covered with 60 spikes composed of heterodimer between precursor prM and envelope protein E. The virion is transported to the Golgi apparatus where the low pH causes dissociation of PrM-E heterodimers and formation of E homodimers. prM-E cleavage is inefficient, and many virions are only partially matured. These uncleaved prM would play a role in immune evasion. Involved in immune evasion, pathogenesis and viral replication. Once cleaved off the polyprotein, is targeted to three destinations: the viral replication cycle, the plasma membrane and the extracellular compartment. Essential for viral replication. Required for formation of the replication complex and recruitment of other non-structural proteins to the ER-derived membrane structures. Excreted as a hexameric lipoparticle that plays a role against host immune response. Antagonizing the complement function. Binds to the host macrophages and dendritic cells. Inhibits signal transduction originating from Toll-like receptor 3 (TLR3). In terms of biological role, component of the viral RNA replication complex that functions in virion assembly and antagonizes the host immune response. Its function is as follows. Required cofactor for the serine protease function of NS3. May have membrane-destabilizing activity and form viroporins. Functionally, displays three enzymatic activities: serine protease, NTPase and RNA helicase. NS3 serine protease, in association with NS2B, performs its autocleavage and cleaves the polyprotein at dibasic sites in the cytoplasm: C-prM, NS2A-NS2B, NS2B-NS3, NS3-NS4A, NS4A-2K and NS4B-NS5. NS3 RNA helicase binds RNA and unwinds dsRNA in the 3' to 5' direction. Regulates the ATPase activity of the NS3 helicase activity. NS4A allows NS3 helicase to conserve energy during unwinding. In terms of biological role, functions as a signal peptide for NS4B and is required for the interferon antagonism activity of the latter. Its function is as follows. Induces the formation of ER-derived membrane vesicles where the viral replication takes place. Inhibits interferon (IFN)-induced host STAT1 phosphorylation and nuclear translocation, thereby preventing the establishment of cellular antiviral state by blocking the IFN-alpha/beta pathway. Inhibits STAT2 translocation in the nucleus after IFN-alpha treatment. Functionally, replicates the viral (+) and (-) RNA genome, and performs the capping of genomes in the cytoplasm. NS5 methylates viral RNA cap at guanine N-7 and ribose 2'-O positions. Besides its role in RNA genome replication, also prevents the establishment of cellular antiviral state by blocking the interferon-alpha/beta (IFN-alpha/beta) signaling pathway. Inhibits host TYK2 and STAT2 phosphorylation, thereby preventing activation of JAK-STAT signaling pathway. This Homo sapiens (Human) protein is Genome polyprotein.